The sequence spans 395 residues: Lipoyl synthase, mitochondrial (395 aa).

A mitochondrion-targeting transit peptide spans 1-14 (MISLRSISRSPAVQ). Positions 112, 117, 123, 142, 146, 149, and 357 each coordinate [4Fe-4S] cluster. Positions 127–346 (KKSEATATIM…RDTALQMGFL (220 aa)) constitute a Radical SAM core domain.

This sequence belongs to the radical SAM superfamily. Lipoyl synthase family. The cofactor is [4Fe-4S] cluster.

Its subcellular location is the mitochondrion. The catalysed reaction is [[Fe-S] cluster scaffold protein carrying a second [4Fe-4S](2+) cluster] + N(6)-octanoyl-L-lysyl-[protein] + 2 oxidized [2Fe-2S]-[ferredoxin] + 2 S-adenosyl-L-methionine + 4 H(+) = [[Fe-S] cluster scaffold protein] + N(6)-[(R)-dihydrolipoyl]-L-lysyl-[protein] + 4 Fe(3+) + 2 hydrogen sulfide + 2 5'-deoxyadenosine + 2 L-methionine + 2 reduced [2Fe-2S]-[ferredoxin]. Its pathway is protein modification; protein lipoylation via endogenous pathway; protein N(6)-(lipoyl)lysine from octanoyl-[acyl-carrier-protein]: step 2/2. Catalyzes the radical-mediated insertion of two sulfur atoms into the C-6 and C-8 positions of the octanoyl moiety bound to the lipoyl domains of lipoate-dependent enzymes, thereby converting the octanoylated domains into lipoylated derivatives. In Debaryomyces hansenii (strain ATCC 36239 / CBS 767 / BCRC 21394 / JCM 1990 / NBRC 0083 / IGC 2968) (Yeast), this protein is Lipoyl synthase, mitochondrial.